The sequence spans 319 residues: Pyrroline-5-carboxylate reductase 1, mitochondrial (319 aa).

An N-acetylserine modification is found at Ser2. NADP(+)-binding positions include 6–11 (IGAGQL) and Ser34. NADPH is bound by residues Ala8, Gln10, Leu11, Ser34, Asp36, Asn56, Val70, Lys71, and Ala97. NADP(+) is bound by residues Asn56, 69 to 72 (AVKP), and 95 to 97 (CAA). Residue Glu164 participates in L-proline binding. Asn230 is a binding site for NADPH. L-proline-binding residues include Ala237 and Thr238. Phosphoserine occurs at positions 278 and 301. Positions 294–319 (SPAGTALSPSGHTKLLPRSLAPAGKD) are disordered.

The protein belongs to the pyrroline-5-carboxylate reductase family. As to quaternary structure, homodecamer; composed of 5 homodimers. Interacts with LTO1.

Its subcellular location is the mitochondrion. It catalyses the reaction L-proline + NADP(+) = (S)-1-pyrroline-5-carboxylate + NADPH + 2 H(+). It carries out the reaction L-proline + NAD(+) = (S)-1-pyrroline-5-carboxylate + NADH + 2 H(+). It functions in the pathway amino-acid biosynthesis; L-proline biosynthesis; L-proline from L-glutamate 5-semialdehyde: step 1/1. Subject to competitive inhibition by the reaction product proline. Subject to competitive inhibition by stearoyl coenzyme A. Functionally, oxidoreductase that catalyzes the last step in proline biosynthesis, which corresponds to the reduction of pyrroline-5-carboxylate to L-proline using NAD(P)H. At physiologic concentrations, has higher specific activity in the presence of NADH. Involved in the cellular response to oxidative stress. This Homo sapiens (Human) protein is Pyrroline-5-carboxylate reductase 1, mitochondrial.